The following is a 343-amino-acid chain: Dihydroorotase (343 aa).

2 residues coordinate Zn(2+): histidine 13 and histidine 15. Substrate contacts are provided by residues 15-17 (HLR) and asparagine 41. Positions 99, 136, and 174 each coordinate Zn(2+). Lysine 99 is subject to N6-carboxylysine. Histidine 136 contributes to the substrate binding site. Residue leucine 219 participates in substrate binding. Position 247 (aspartate 247) interacts with Zn(2+). Aspartate 247 is an active-site residue. Histidine 251 and alanine 263 together coordinate substrate.

This sequence belongs to the metallo-dependent hydrolases superfamily. DHOase family. Class II DHOase subfamily. As to quaternary structure, homodimer. The cofactor is Zn(2+).

The enzyme catalyses (S)-dihydroorotate + H2O = N-carbamoyl-L-aspartate + H(+). Its pathway is pyrimidine metabolism; UMP biosynthesis via de novo pathway; (S)-dihydroorotate from bicarbonate: step 3/3. Catalyzes the reversible cyclization of carbamoyl aspartate to dihydroorotate. The chain is Dihydroorotase from Shewanella baltica (strain OS155 / ATCC BAA-1091).